The sequence spans 446 residues: Glutamate--tRNA ligase 2 (446 aa).

A 'HIGH' region motif is present at residues 8 to 18; it reads PSPTGYLHIGN. Positions 239–243 match the 'KMSKS' region motif; that stretch reads GLSKR. K242 provides a ligand contact to ATP.

This sequence belongs to the class-I aminoacyl-tRNA synthetase family. Glutamate--tRNA ligase type 1 subfamily. As to quaternary structure, monomer.

The protein localises to the cytoplasm. The catalysed reaction is tRNA(Glu) + L-glutamate + ATP = L-glutamyl-tRNA(Glu) + AMP + diphosphate. In terms of biological role, catalyzes the attachment of glutamate to tRNA(Glu) in a two-step reaction: glutamate is first activated by ATP to form Glu-AMP and then transferred to the acceptor end of tRNA(Glu). The sequence is that of Glutamate--tRNA ligase 2 from Methylobacterium radiotolerans (strain ATCC 27329 / DSM 1819 / JCM 2831 / NBRC 15690 / NCIMB 10815 / 0-1).